The sequence spans 342 residues: Ribosomal RNA small subunit methyltransferase H (342 aa).

Residues 42-44 (GGH), Asp-61, Phe-88, Asp-119, and Gln-126 contribute to the S-adenosyl-L-methionine site.

It belongs to the methyltransferase superfamily. RsmH family.

It localises to the cytoplasm. It catalyses the reaction cytidine(1402) in 16S rRNA + S-adenosyl-L-methionine = N(4)-methylcytidine(1402) in 16S rRNA + S-adenosyl-L-homocysteine + H(+). Its function is as follows. Specifically methylates the N4 position of cytidine in position 1402 (C1402) of 16S rRNA. In Corynebacterium jeikeium (strain K411), this protein is Ribosomal RNA small subunit methyltransferase H.